A 408-amino-acid polypeptide reads, in one-letter code: Hepatocyte nuclear factor 4-gamma (408 aa).

A DNA-binding region (nuclear receptor) is located at residues 9 to 84; that stretch reads NCLCAICGDR…AGMKKEAVQN (76 aa). NR C4-type zinc fingers lie at residues 12 to 32 and 48 to 72; these read CAICGDRATGKHYGASSCDGC and CRFSRQCVVDKDKRNQCRYCRLRKC. Serine 94 carries the post-translational modification Phosphoserine. The region spanning 99–328 is the NR LBD domain; the sequence is SNIPSINTLA…NLLQEMLLGG (230 aa). The interval 369 to 408 is disordered; the sequence is ATPETPLPSPPQGSGQEPYKITANQASVISHQSLSKQKQL. A phosphothreonine mark is found at threonine 370 and threonine 373. Serine 377 is subject to Phosphoserine. The span at 390–408 shows a compositional bias: polar residues; the sequence is TANQASVISHQSLSKQKQL.

The protein belongs to the nuclear hormone receptor family. NR2 subfamily.

It is found in the nucleus. Functionally, transcription factor. Has a lower transcription activation potential than HNF4-alpha. The chain is Hepatocyte nuclear factor 4-gamma (Hnf4g) from Mus musculus (Mouse).